We begin with the raw amino-acid sequence, 148 residues long: Protein-export protein SecB (148 aa).

It belongs to the SecB family. Homotetramer, a dimer of dimers. One homotetramer interacts with 1 SecA dimer.

It is found in the cytoplasm. Its function is as follows. One of the proteins required for the normal export of preproteins out of the cell cytoplasm. It is a molecular chaperone that binds to a subset of precursor proteins, maintaining them in a translocation-competent state. It also specifically binds to its receptor SecA. This chain is Protein-export protein SecB, found in Psychrobacter arcticus (strain DSM 17307 / VKM B-2377 / 273-4).